We begin with the raw amino-acid sequence, 271 residues long: Thiazole synthase (271 aa).

Lys108 functions as the Schiff-base intermediate with DXP in the catalytic mechanism. 1-deoxy-D-xylulose 5-phosphate contacts are provided by residues Gly169, 195 to 196, and 217 to 218; these read AG and NS.

Belongs to the ThiG family. As to quaternary structure, homotetramer. Forms heterodimers with either ThiH or ThiS.

Its subcellular location is the cytoplasm. The enzyme catalyses [ThiS sulfur-carrier protein]-C-terminal-Gly-aminoethanethioate + 2-iminoacetate + 1-deoxy-D-xylulose 5-phosphate = [ThiS sulfur-carrier protein]-C-terminal Gly-Gly + 2-[(2R,5Z)-2-carboxy-4-methylthiazol-5(2H)-ylidene]ethyl phosphate + 2 H2O + H(+). It functions in the pathway cofactor biosynthesis; thiamine diphosphate biosynthesis. Functionally, catalyzes the rearrangement of 1-deoxy-D-xylulose 5-phosphate (DXP) to produce the thiazole phosphate moiety of thiamine. Sulfur is provided by the thiocarboxylate moiety of the carrier protein ThiS. In vitro, sulfur can be provided by H(2)S. In Prochlorococcus marinus (strain SARG / CCMP1375 / SS120), this protein is Thiazole synthase.